Here is a 51-residue protein sequence, read N- to C-terminus: Insulin (51 aa).

Cystine bridges form between cysteine 8-cysteine 37, cysteine 20-cysteine 50, and cysteine 36-cysteine 41.

This sequence belongs to the insulin family. In terms of assembly, heterodimer of a B chain and an A chain linked by two disulfide bonds.

It localises to the secreted. In terms of biological role, insulin decreases blood glucose concentration. It increases cell permeability to monosaccharides, amino acids and fatty acids. It accelerates glycolysis, the pentose phosphate cycle, and glycogen synthesis in liver. This Pagrus major (Red sea bream) protein is Insulin.